Reading from the N-terminus, the 909-residue chain is NADH-quinone oxidoreductase subunit G (909 aa).

The 2Fe-2S ferredoxin-type domain maps to 1–83 (MATIYVDGKE…GTYISIEDEE (83 aa)). Residues Cys34, Cys45, Cys48, and Cys67 each coordinate [2Fe-2S] cluster. The 4Fe-4S His(Cys)3-ligated-type domain occupies 83-122 (EAKEFRKCVVEWQMTNHPHDCPVCEEGGACHLQDMTVMTG). [4Fe-4S] cluster-binding residues include His99, Cys103, Cys106, Cys112, Cys151, Cys154, Cys157, Cys201, Cys228, Cys231, Cys235, and Cys263. The region spanning 221–277 (MQFAPSICQQCSVGCNISPGERYGELRRIENRFHGSVNHYFLCDRGRFGYGYVNLPD) is the 4Fe-4S Mo/W bis-MGD-type domain.

Belongs to the complex I 75 kDa subunit family. Composed of 13 different subunits. Subunits NuoCD, E, F, and G constitute the peripheral sector of the complex. The cofactor is [2Fe-2S] cluster. [4Fe-4S] cluster is required as a cofactor.

The catalysed reaction is a quinone + NADH + 5 H(+)(in) = a quinol + NAD(+) + 4 H(+)(out). Functionally, NDH-1 shuttles electrons from NADH, via FMN and iron-sulfur (Fe-S) centers, to quinones in the respiratory chain. The immediate electron acceptor for the enzyme in this species is believed to be ubiquinone. Couples the redox reaction to proton translocation (for every two electrons transferred, four hydrogen ions are translocated across the cytoplasmic membrane), and thus conserves the redox energy in a proton gradient. The chain is NADH-quinone oxidoreductase subunit G (nuoG) from Shewanella oneidensis (strain ATCC 700550 / JCM 31522 / CIP 106686 / LMG 19005 / NCIMB 14063 / MR-1).